The chain runs to 540 residues: DEAD-box ATP-dependent RNA helicase 57 (540 aa).

Residues aspartate 24–aspartate 73 form a disordered region. Residues lysine 47 to arginine 64 show a composition bias toward basic residues. The stretch at lysine 101–aspartate 129 forms a coiled coil. A Q motif motif is present at residues glutamate 146–arginine 174. Residues isoleucine 177–valine 347 form the Helicase ATP-binding domain. An ATP-binding site is contributed by alanine 190–threonine 197. The DEAD box motif lies at aspartate 294 to aspartate 297. A Helicase C-terminal domain is found at alanine 375 to proline 519.

This sequence belongs to the DEAD box helicase family. DDX52/ROK1 subfamily.

It catalyses the reaction ATP + H2O = ADP + phosphate + H(+). This Oryza sativa subsp. japonica (Rice) protein is DEAD-box ATP-dependent RNA helicase 57.